A 169-amino-acid polypeptide reads, in one-letter code: Thaumatin-like pathogenesis-related protein 3 (169 aa).

Positions 1–21 are cleaved as a signal peptide; it reads MATSSAVLFLLLAVFAAGASA.

Belongs to the thaumatin family.

Functionally, associated with resistance against stem rust fungi. The polypeptide is Thaumatin-like pathogenesis-related protein 3 (RASTL-3) (Avena sativa (Oat)).